A 141-amino-acid chain; its full sequence is Ribonuclease VapC16 (141 aa).

D99 is a Mg(2+) binding site. Positions 99–141 are disordered; the sequence is DHAHTAHRRASGSPSTSIRPCAHRPGTAAWPDDHHRRRPVSCL.

The protein belongs to the PINc/VapC protein family. Requires Mg(2+) as cofactor.

Toxic component of a type II toxin-antitoxin (TA) system. An RNase. The cognate antitoxin is VapB16. The chain is Ribonuclease VapC16 from Mycobacterium tuberculosis (strain ATCC 25618 / H37Rv).